Consider the following 218-residue polypeptide: Interleukin-37 (218 aa).

A disordered region spans residues methionine 1–leucine 40. Positions methionine 1–phenylalanine 45 are cleaved as a propeptide — removed in mature form. A compositionally biased stretch (basic and acidic residues) spans glycine 13–proline 22.

It belongs to the IL-1 family. Interacts with SMAD3. Binds IL18R1, but not to IL1R1, with lower affinity than IL18, and does not seem to act as a receptor antagonist for IL18. Interacts with cargo receptor TMED10; the interaction mediates the translocation from the cytoplasm into the ERGIC (endoplasmic reticulum-Golgi intermediate compartment) and thereby secretion. Post-translationally, proteolytically converted to the mature form by CASP1. In terms of tissue distribution, in general, low constitutive expression, if any, in healthy tissues; high expression in inflammatory counterparts, including in synovial tissues from individuals with active rheumatoid arthritis. Isoform A, isoform B and isoform C are expressed in testis, colon, placenta, lung and lymph node. Isoform D and isoform E were found only in testis and bone marrow. Whereas only isoform A is found in brain, only isoform B in kidney and only isoform C in heart.

The protein resides in the cytoplasm. The protein localises to the cytosol. It localises to the nucleus. It is found in the secreted. Its function is as follows. Immune regulatory cytokine that acts as a suppressor of innate inflammatory and immune responses involved in curbing excessive inflammation. Signaling can occur via two mechanisms, intracellularly through nuclear translocation with SMAD3 and extracellularly after secretion and binding to its receptor composed of IL18R1 and IL18RAP. Suppresses, or reduces, pro-inflammatory cytokine production, including IL1A and IL6, as well as CCL12, CSF1, CSF2, CXCL13, IL1B, IL23A and IL1RN, but spares anti-inflammatory cytokines. Inhibits dendritic cell activation. This is Interleukin-37 from Homo sapiens (Human).